A 921-amino-acid polypeptide reads, in one-letter code: Valine--tRNA ligase (921 aa).

Residues 40–50 carry the 'HIGH' region motif; it reads PNVTGSLHMGH. Positions 522-526 match the 'KMSKS' region motif; sequence KMSKS. Lys525 is a binding site for ATP. A coiled-coil region spans residues 849–921; it reads MADLIDKEAE…LQHKNRIESL (73 aa).

This sequence belongs to the class-I aminoacyl-tRNA synthetase family. ValS type 1 subfamily. Monomer.

It is found in the cytoplasm. It catalyses the reaction tRNA(Val) + L-valine + ATP = L-valyl-tRNA(Val) + AMP + diphosphate. Catalyzes the attachment of valine to tRNA(Val). As ValRS can inadvertently accommodate and process structurally similar amino acids such as threonine, to avoid such errors, it has a 'posttransfer' editing activity that hydrolyzes mischarged Thr-tRNA(Val) in a tRNA-dependent manner. This Legionella pneumophila (strain Paris) protein is Valine--tRNA ligase.